The sequence spans 491 residues: Lysine--tRNA ligase (491 aa).

2 residues coordinate Mg(2+): Glu400 and Glu407.

The protein belongs to the class-II aminoacyl-tRNA synthetase family. Homodimer. Requires Mg(2+) as cofactor.

The protein resides in the cytoplasm. It catalyses the reaction tRNA(Lys) + L-lysine + ATP = L-lysyl-tRNA(Lys) + AMP + diphosphate. This Mesomycoplasma hyopneumoniae (strain J / ATCC 25934 / NCTC 10110) (Mycoplasma hyopneumoniae) protein is Lysine--tRNA ligase.